A 109-amino-acid polypeptide reads, in one-letter code: Irditoxin subunit A (109 aa).

The N-terminal stretch at 1-19 (MKTLLLAVAVVAFVCLGSA) is a signal peptide. A propeptide spanning residues 20 to 34 (DQLGLGRQQIDWGQG) is cleaved from the precursor. Gln-35 is subject to Pyrrolidone carboxylic acid. 5 disulfide bridges follow: Cys-44-Cys-66, Cys-47-Cys-55, Cys-61-Cys-85, Cys-89-Cys-100, and Cys-101-Cys-106.

The protein belongs to the three-finger toxin family. Ancestral subfamily. Boigatoxin sub-subfamily. In terms of assembly, heterodimer of A and B chains; disulfide-linked. Expressed by the venom gland.

The protein resides in the secreted. In terms of biological role, this bird and reptile-specific postsynaptic neurotoxin inhibits the chick muscle alpha-1-beta-1-gamma-delta (CHRNA1-CHRNB1-CHRNG-CHNRD) nicotinic acetylcholine receptor (nAChR) 100-fold more compared with the mouse receptor. In vivo, produces rapid flaccid paralysis, dyspnea and increased respiratory rate in geckos. At sublethal doses geckos were immobilized for up to three days and then recovered. Chicks injected with lethal doses showed rapid onset of inactivity, dyspnea and neck droop, and no extended paralysis with survival was seen. This chain is Irditoxin subunit A, found in Boiga irregularis (Brown tree snake).